Reading from the N-terminus, the 494-residue chain is Flap endonuclease 1 (494 aa).

Residues 1–106 (MGIKGLIPFL…KTLEKRRQQR (106 aa)) form an N-domain region. Aspartate 34 lines the Mg(2+) pocket. DNA-binding residues include arginine 47 and arginine 72. Mg(2+) is bound by residues aspartate 88, glutamate 160, glutamate 162, aspartate 181, and aspartate 183. Positions 124–253 (SVKKLVGRTV…KTAYSLVKKY (130 aa)) are I-domain. Glutamate 160 contributes to the DNA binding site. DNA contacts are provided by glycine 231 and aspartate 233. Mg(2+) is bound at residue aspartate 233. Positions 330–338 (IQTSLLSFL) are interaction with PCNA. 2 disordered regions span residues 341–382 (PQHN…ESST) and 395–426 (LFCE…ENET). Over residues 408 to 426 (DRGRVDKNEDLFKKSENET) the composition is skewed to basic and acidic residues.

This sequence belongs to the XPG/RAD2 endonuclease family. FEN1 subfamily. As to quaternary structure, interacts with PCNA. Three molecules of FEN1 bind to one PCNA trimer with each molecule binding to one PCNA monomer. PCNA stimulates the nuclease activity without altering cleavage specificity. The cofactor is Mg(2+). Phosphorylated. Phosphorylation upon DNA damage induces relocalization to the nuclear plasma.

It is found in the nucleus. Its subcellular location is the nucleolus. The protein localises to the nucleoplasm. The protein resides in the mitochondrion. In terms of biological role, structure-specific nuclease with 5'-flap endonuclease and 5'-3' exonuclease activities involved in DNA replication and repair. During DNA replication, cleaves the 5'-overhanging flap structure that is generated by displacement synthesis when DNA polymerase encounters the 5'-end of a downstream Okazaki fragment. It enters the flap from the 5'-end and then tracks to cleave the flap base, leaving a nick for ligation. Also involved in the long patch base excision repair (LP-BER) pathway, by cleaving within the apurinic/apyrimidinic (AP) site-terminated flap. Acts as a genome stabilization factor that prevents flaps from equilibrating into structures that lead to duplications and deletions. Also possesses 5'-3' exonuclease activity on nicked or gapped double-stranded DNA, and exhibits RNase H activity. Also involved in replication and repair of rDNA and in repairing mitochondrial DNA. In Theileria parva (East coast fever infection agent), this protein is Flap endonuclease 1.